The sequence spans 619 residues: MEIVYVYVKKRSEFGKQCNFSDRQAELNIDISPNPELAALYVERNPVDTGIQCSASMSEHEANTERFEMENCGVNHVEGGWPKDVNPQELEQTIRFRKKVEKDENYINAVMQLGSIMEHCIKQNNAIDIYEEYFDDEEAVEVTEEAPSAKTINVFRDPQEIKRTATHLSWHPDGNKKLAVAYSCLQFQRSPMGMSHDSYIWDLENPNRPEIALKPSSPLITLEYNPKDSHVLLGGCYNGQIACWDTRKGSLVAELSTIEFSHRDPVYGTIWLQSKTGTECFSASTDGQVMWWDIRKISEPTEVVIMDITRKEQLENALGAISLEFESTLPTKFMVGTEQGIVISCNRKAKTPAEKIVCTFSGHHGPIYALQRNPFYPKNFLTVGDWAARIWSEESRESSIMWTRYHMAYLSDGAWSPVRPAVFFTTKMDGTLDIWDLVFKQCDPALSLKVCDDPLFCLRVQDTGCLIACGSELGTTTLLEVSSSLSTLQRNERNIASSIFERETRREKILEARHREMRLKEKGKAEGRDDDQKEEETALDLDELVNKAEEEFFEVIFAELKRKEAEALKKKPKPKKASIEVEGEDELEDIAGEEEESGIIMGEDTGEDDMDEKNEGGAP.

WD repeat units lie at residues 214-254, 261-302, 362-401, 405-445, and 450-489; these read KPSS…LVAE, SHRD…EPTE, GHHGPIYALQRNPFYPKNFLTVGDWAARIWSEESRESSIM, YHMA…CDPA, and VCDDPLFCLRVQDTGCLIACGSELGTTTLLEVSSSLSTLQ. Residues 566-619 are disordered; sequence EALKKKPKPKKASIEVEGEDELEDIAGEEEESGIIMGEDTGEDDMDEKNEGGAP. Residues 581-597 are compositionally biased toward acidic residues; it reads VEGEDELEDIAGEEEES.

This sequence belongs to the dynein intermediate chain family. In terms of assembly, consists of at least two heavy chains and a number of intermediate and light chains. Interacts with DNAAF2. Interacts with DNAAF6/PIH1D3. Interacts with HEATR2; probably involved in outer arm dynein assembly. Interacts with CFAP53.

It is found in the cytoplasm. It localises to the cytoskeleton. The protein localises to the cilium axoneme. Its subcellular location is the dynein axonemal particle. Functionally, part of the dynein complex of respiratory cilia. This Rattus norvegicus (Rat) protein is Dynein axonemal intermediate chain 2 (Dnai2).